Consider the following 538-residue polypeptide: SWM histone demethylase complex subunit phf2 (538 aa).

Disordered regions lie at residues 28 to 47 (RFPNDLHPTMFEGEESNQNG), 98 to 150 (EIES…SSPL), and 198 to 222 (TKSGRKVHRPNHFDPLVKLPTRRRG). The span at 98–111 (EIESSKNQETDAKS) shows a compositional bias: basic and acidic residues. The segment at 232–288 (AMKCSVCQRLQSPPKNRIVFCDGCNTPFHQLCHEPYISDELLDSPNGEWFCDDCIRR) adopts a PHD-type zinc-finger fold. A compositionally biased stretch (polar residues) spans 367–392 (GDQYLSLNNGTESQSKTTKHSTSLPS). The segment at 367–396 (GDQYLSLNNGTESQSKTTKHSTSLPSTEPV) is disordered.

As to quaternary structure, component of the SWM histone demethylase complex composed of at least lsd1, lsd2, phf1 and phf2.

The protein localises to the nucleus. Component of the SWM histone demethylase complex that specifically demethylates H3K9me2, a specific tag for epigenetic transcriptional activation, thereby acting as a corepressor. Has a role in regulating heterochromatin propagation and euchromatic transcription. This chain is SWM histone demethylase complex subunit phf2 (phf2), found in Schizosaccharomyces pombe (strain 972 / ATCC 24843) (Fission yeast).